Reading from the N-terminus, the 1025-residue chain is Leucyl-cystinyl aminopeptidase (1025 aa).

An N-acetylmethionine modification is found at M1. The Cytoplasmic segment spans residues 1 to 109 (METFTNDRLQ…DGTCSVPSAR (109 aa)). The Dileucine internalization motif signature appears at 53–54 (LL). Y70 is subject to Phosphotyrosine. The Dileucine internalization motif motif lies at 76–77 (LL). 2 positions are modified to phosphoserine; by PKC/PRKCZ; in vitro: S80 and S91. The segment at 96-101 (RQSPDG) is tankyrase binding. A helical; Signal-anchor for type II membrane protein transmembrane segment spans residues 110 to 131 (TLVICVFVIVVAVSVIMVIYLL). Residues 132-1025 (PRCTFTKEGC…RNLKTLTLWL (894 aa)) lie on the Extracellular side of the membrane. N-linked (GlcNAc...) asparagine glycans are attached at residues N145, N184, N215, N256, and N266. Residue E295 participates in substrate binding. N-linked (GlcNAc...) asparagine glycans are attached at residues N368 and N374. 428 to 432 (GAMEN) contributes to the substrate binding site. The N-linked (GlcNAc...) asparagine glycan is linked to N447. H464 is a binding site for Zn(2+). The active-site Proton acceptor is E465. Zn(2+) is bound by residues H468 and E487. N525, N578, N664, N682, N695, N758, N834, N850, and N989 each carry an N-linked (GlcNAc...) asparagine glycan.

The protein belongs to the peptidase M1 family. As to quaternary structure, homodimer. Binds tankyrases 1 and 2. Zn(2+) serves as cofactor. Post-translationally, N-glycosylated. In terms of tissue distribution, highly expressed in heart, brain, spleen, lung, kidney and white adipose tissue. Detected at lower levels in skeletal muscle and liver.

Its subcellular location is the cell membrane. It localises to the endomembrane system. The catalysed reaction is Release of an N-terminal amino acid, Cys-|-Xaa-, in which the half-cystine residue is involved in a disulfide loop, notably in oxytocin or vasopressin. Hydrolysis rates on a range of aminoacyl arylamides exceed that for the cystinyl derivative, however.. In terms of biological role, release of an N-terminal amino acid, cleave before cysteine, leucine as well as other amino acids. Degrades peptide hormones such as oxytocin, vasopressin and angiotensin III, and plays a role in maintaining homeostasis during pregnancy. May be involved in the inactivation of neuronal peptides in the brain. Cleaves Met-enkephalin and dynorphin. Binds angiotensin IV and may be the angiotensin IV receptor in the brain. In Rattus norvegicus (Rat), this protein is Leucyl-cystinyl aminopeptidase (Lnpep).